The following is a 74-amino-acid chain: Male-specific sperm protein Mst84Db (74 aa).

Belongs to the MST(3)CGP family. As to expression, testis.

This is Male-specific sperm protein Mst84Db (Mst84Db) from Drosophila melanogaster (Fruit fly).